The sequence spans 216 residues: Probable GTP-binding protein EngB (216 aa).

An EngB-type G domain is found at 24-205 (ATPEIAFVGR…WARLAALAAE (182 aa)). GTP-binding positions include 32 to 39 (GRSNVGKS), 59 to 63 (GRTRA), 86 to 89 (DLPG), 153 to 156 (TKTD), and 184 to 186 (FSA). Mg(2+) contacts are provided by serine 39 and threonine 61.

The protein belongs to the TRAFAC class TrmE-Era-EngA-EngB-Septin-like GTPase superfamily. EngB GTPase family. Requires Mg(2+) as cofactor.

Functionally, necessary for normal cell division and for the maintenance of normal septation. This chain is Probable GTP-binding protein EngB, found in Anaeromyxobacter dehalogenans (strain 2CP-C).